The chain runs to 974 residues: MTIKTPGTPVSKMDRTPAVTPGGSSRSREEKIVVTVRLRPMNKRELLAKDQVAWECVNDHTIVSKPQVQERLHHQSSFTFDKVFGPESLTENVYEDGVKNVALSALMGINATIFAYGQTSSGKTYTMRGVTEKAVNDIYNHIIKTPERDFTIKISGLEIYNENVRDLLNSDSGRALKLLDDPEKGTVVEKLVEETANNDNHLRHLISICEAQRQVGETALNDTSSRSHQIIRLTIQSTHRENSDCVRSYMASLNFVDLAGSERASQSQADGTRLREGCHINLSLMTLTTVIRKLSVGKRSGHIPYRDSKLTRILQHSLGGNARTAIICTLSPALAHVEQSRNTLYFANRAKEVTNNAHVNMVVSDKQLVKHLQKEVARLEAERRTPGPSTEKDFKIQQMEMEIGELRRQRDDAQIQLEELRQKLQGDQQQNKGLNPFESPDPPVRKCLSYSVAVTPSSENKTLNRNERARKTTMRQSMIRQSSTAPFTLMHEIRKLEHLQEQLGEEATKALEVLQKEVACHRLGNQDAAQTIAKLQAEIREMRTVKPSAMLKEVGDVIAPNKSVSANLKEEITRLHSQGSTIANLEEQLESVQKSIDKLVMSLPSNISAGDETPKTKNHHHQSKKKKLLPLTPSSASNRQNFLKSPCSPLSASRQVLDCDAENKAPQENNSSAARGATTPQGSEKETPQKGEESGDVSSREGTPGYRRSSSVNMKKMQQMFQNAAEENVRSIRAYVTELKERVAKLQYQKQLLVCQVLELEANDGAGYSVENEENTIMEDEEQNQVAWHITFIEERQQIIELWHVCHVSIIHRTQFYLLFKGDQADQIYMEVELRRLTWLEQHLAEVGNATPARNCDESVVSLSSSIKALRREREFLAKRVNSRLTPEEREELYMKWDVPLEGKQRKLQFVNKLWTDPYDSRHVQESAEIVAKLVGFCESGNISKEMFELNFAVPSDKRQWNIGWDNISNLLHL.

The segment at 1-29 is disordered; sequence MTIKTPGTPVSKMDRTPAVTPGGSSRSRE. Residues 31–353 enclose the Kinesin motor domain; the sequence is KIVVTVRLRP…LYFANRAKEV (323 aa). ATP is bound at residue 117–124; the sequence is GQTSSGKT. 2 coiled-coil regions span residues 362 to 435 and 565 to 603; these read VVSD…KGLN and SANL…VMSL. 2 disordered regions span residues 605 to 649 and 663 to 713; these read SNIS…PCSP and NKAP…SSVN. Positions 616-628 are enriched in basic residues; sequence TKNHHHQSKKKKL. 2 stretches are compositionally biased toward polar residues: residues 638-649 and 666-682; these read NRQNFLKSPCSP and PQEN…TPQG. A compositionally biased stretch (basic and acidic residues) spans 683–693; the sequence is SEKETPQKGEE.

Belongs to the TRAFAC class myosin-kinesin ATPase superfamily. Kinesin family. KIN-7 subfamily. Phosphorylated at Thr-145, Thr-687 and Thr-703 by CDKAs and CDKBs. Phosphorylated NACK1 fails to mediate cytokinesis. In terms of tissue distribution, expressed in roots, flowers, pollen mother cells and embryos.

Its subcellular location is the cytoplasm. It is found in the cytoskeleton. It localises to the phragmoplast. Probable plus end-directed motor protein that functions in the NACK-PQR (ANP1-MKK6-MPK4) MAP kinase signaling pathway, which is essential for somatic cell cytokinesis, especially for the cell-plate formation and its expansion. Regulates the activity and the localization of ANP1, probably by association through the non-catalytic region of the kinase. Functionally redundant with NACK2 and essential to promote the progression of cytokinesis and for cellularization (formation of the cell plate) during microgametogenesis and megagametogenesis. The polypeptide is Kinesin-like protein KIN-7A (Arabidopsis thaliana (Mouse-ear cress)).